The sequence spans 372 residues: Heterogeneous nuclear rnp K-like protein 2 (372 aa).

Polar residues predominate over residues 1-23; it reads MSDINDPNSISLPVGSSCTSRGA. Positions 1 to 49 are disordered; that stretch reads MSDINDPNSISLPVGSSCTSRGASTETFTTSRSTTLFSSQQESKDEGNV. A compositionally biased stretch (low complexity) spans 24–39; that stretch reads STETFTTSRSTTLFSS. KH domains follow at residues 59–123, 167–232, and 283–354; these read TINH…LGQI, IGTS…LLQI, and EFKA…ESML.

It belongs to the HEK2 family. In terms of assembly, binds RNA.

The protein localises to the cytoplasm. Its subcellular location is the P-body. It localises to the nucleus. The protein resides in the chromosome. It is found in the telomere. Functionally, RNA-binding protein involved in the correct localization of transcripts in the cell. RNA localization is a widespread mechanism for achieving localized protein synthesis. Involved in structural and functional organization of telomeric chromatin and regulates silencing at the HMR locus. The polypeptide is Heterogeneous nuclear rnp K-like protein 2 (HEK2) (Zygosaccharomyces rouxii (strain ATCC 2623 / CBS 732 / NBRC 1130 / NCYC 568 / NRRL Y-229)).